The primary structure comprises 971 residues: Isoleucine--tRNA ligase (971 aa).

The short motif at 64–74 (PYANGHIHIGH) is the 'HIGH' region element. E602 serves as a coordination point for L-isoleucyl-5'-AMP. The short motif at 643-647 (KMSKS) is the 'KMSKS' region element. K646 contributes to the ATP binding site.

It belongs to the class-I aminoacyl-tRNA synthetase family. IleS type 1 subfamily. As to quaternary structure, monomer.

It localises to the cytoplasm. It catalyses the reaction tRNA(Ile) + L-isoleucine + ATP = L-isoleucyl-tRNA(Ile) + AMP + diphosphate. Its function is as follows. Catalyzes the attachment of isoleucine to tRNA(Ile). As IleRS can inadvertently accommodate and process structurally similar amino acids such as valine, to avoid such errors it has two additional distinct tRNA(Ile)-dependent editing activities. One activity is designated as 'pretransfer' editing and involves the hydrolysis of activated Val-AMP. The other activity is designated 'posttransfer' editing and involves deacylation of mischarged Val-tRNA(Ile). The protein is Isoleucine--tRNA ligase of Bartonella quintana (strain Toulouse) (Rochalimaea quintana).